We begin with the raw amino-acid sequence, 485 residues long: Glutamyl-tRNA(Gln) amidotransferase subunit A (485 aa).

Residues K74 and S149 each act as charge relay system in the active site. S173 functions as the Acyl-ester intermediate in the catalytic mechanism.

Belongs to the amidase family. GatA subfamily. In terms of assembly, heterotrimer of A, B and C subunits.

It carries out the reaction L-glutamyl-tRNA(Gln) + L-glutamine + ATP + H2O = L-glutaminyl-tRNA(Gln) + L-glutamate + ADP + phosphate + H(+). Its function is as follows. Allows the formation of correctly charged Gln-tRNA(Gln) through the transamidation of misacylated Glu-tRNA(Gln) in organisms which lack glutaminyl-tRNA synthetase. The reaction takes place in the presence of glutamine and ATP through an activated gamma-phospho-Glu-tRNA(Gln). In Synechococcus sp. (strain RCC307), this protein is Glutamyl-tRNA(Gln) amidotransferase subunit A.